Here is a 343-residue protein sequence, read N- to C-terminus: Heat-inducible transcription repressor HrcA (343 aa).

It belongs to the HrcA family.

Its function is as follows. Negative regulator of class I heat shock genes (grpE-dnaK-dnaJ and groELS operons). Prevents heat-shock induction of these operons. The sequence is that of Heat-inducible transcription repressor HrcA from Mycobacterium tuberculosis (strain ATCC 25177 / H37Ra).